Reading from the N-terminus, the 334-residue chain is Phosphate acyltransferase (334 aa).

The protein belongs to the PlsX family. As to quaternary structure, homodimer. Probably interacts with PlsY.

It is found in the cytoplasm. The catalysed reaction is a fatty acyl-[ACP] + phosphate = an acyl phosphate + holo-[ACP]. The protein operates within lipid metabolism; phospholipid metabolism. Functionally, catalyzes the reversible formation of acyl-phosphate (acyl-PO(4)) from acyl-[acyl-carrier-protein] (acyl-ACP). This enzyme utilizes acyl-ACP as fatty acyl donor, but not acyl-CoA. In Desulfitobacterium hafniense (strain DSM 10664 / DCB-2), this protein is Phosphate acyltransferase.